The chain runs to 637 residues: MMFWRKLPKALFIGLTLAIAVNLLLVFSSKGTLQNLFTGGLHRELPLHLNKRYGAVIKRLSHLEVELQDLKESMKLALRQQENVNSTLKRAKDEVRPLLKAMETKVNETKKHKTQMKLFPHSQLFRQWGEDLSEAQQKAAQDLFRKFGYNAYLSNQLPLNRTIPDTRDYRCLRKTYPSQLPSLSVILIFVNEALSIIQRAITSIINRTPSRLLKEIILVDDFSSNGELKVHLDEKIKLYNQKYPGLLKIIRHPERKGLAQARNTGWEAATADVVAILDAHIEVNVGWAEPILARIQEDRTVIVSPVFDNIRFDTFKLDKYELAVDGFNWELWCRYDALPQAWIDLHDVTAPVKSPSIMGILAANRHFLGEIGSLDGGMLIYGGENVELSLRVWQCGGKVEILPCSRIAHLERHHKPYALDLTAALKRNALRVAEIWMDEHKHMVYLAWNIPLQNSGIDFGDVSSRMALREKLKCKTFDWYLKNVYPLLKPLHTIVGYGRMKNLLDENVCLDQGPVPGNTPIMYYCHEFSSQNVYYHLTGELYVGQLIAEASASDRCLTDPGKAEKPTLEPCSKAAKNRLHIYWDFKPGGAVINRDTKRCLEMKKDLLGSHVLVLQTCSTQVWEIQHTVRDWGQTNSQ.

The Cytoplasmic portion of the chain corresponds to 1–6 (MMFWRK). Residues 7 to 29 (LPKALFIGLTLAIAVNLLLVFSS) form a helical; Signal-anchor for type II membrane protein membrane-spanning segment. Residues 30–637 (KGTLQNLFTG…VRDWGQTNSQ (608 aa)) lie on the Lumenal side of the membrane. N-linked (GlcNAc...) asparagine glycans are attached at residues Asn85, Asn107, and Asn160. 5 disulfide bridges follow: Cys171–Cys404, Cys395–Cys474, Cys509–Cys525, Cys556–Cys571, and Cys599–Cys617. The tract at residues 180 to 294 (LPSLSVILIF…VGWAEPILAR (115 aa)) is catalytic subdomain A. Positions 221 and 255 each coordinate substrate. Positions 278, 280, and 409 each coordinate Mn(2+). Residues 351–412 (PVKSPSIMGI…PCSRIAHLER (62 aa)) form a catalytic subdomain B region. Substrate is bound by residues Arg412 and Tyr417. Residues 496–634 (GYGRMKNLLD…QHTVRDWGQT (139 aa)) enclose the Ricin B-type lectin domain.

This sequence belongs to the glycosyltransferase 2 family. GalNAc-T subfamily. The cofactor is Mn(2+). In terms of tissue distribution, widely expressed. Expressed in heart, skeletal muscle, kidney, liver, small intestine and placenta. Weakly expressed in colon, thymus, spleen, lung and leukocyte.

The protein localises to the golgi apparatus membrane. The catalysed reaction is L-seryl-[protein] + UDP-N-acetyl-alpha-D-galactosamine = a 3-O-[N-acetyl-alpha-D-galactosaminyl]-L-seryl-[protein] + UDP + H(+). It catalyses the reaction L-threonyl-[protein] + UDP-N-acetyl-alpha-D-galactosamine = a 3-O-[N-acetyl-alpha-D-galactosaminyl]-L-threonyl-[protein] + UDP + H(+). It functions in the pathway protein modification; protein glycosylation. Functionally, probably catalyzes the initial reaction in O-linked oligosaccharide biosynthesis, the transfer of an N-acetyl-D-galactosamine residue to a serine or threonine residue on the protein receptor. The polypeptide is Probable polypeptide N-acetylgalactosaminyltransferase 8 (GALNT8) (Homo sapiens (Human)).